The following is a 358-amino-acid chain: Peptide chain release factor 1 (358 aa).

N5-methylglutamine is present on glutamine 234.

This sequence belongs to the prokaryotic/mitochondrial release factor family. In terms of processing, methylated by PrmC. Methylation increases the termination efficiency of RF1.

Its subcellular location is the cytoplasm. In terms of biological role, peptide chain release factor 1 directs the termination of translation in response to the peptide chain termination codons UAG and UAA. The sequence is that of Peptide chain release factor 1 from Leifsonia xyli subsp. xyli (strain CTCB07).